The following is a 48-amino-acid chain: Large ribosomal subunit protein eL40 (48 aa).

Belongs to the eukaryotic ribosomal protein eL40 family.

This Methanospirillum hungatei JF-1 (strain ATCC 27890 / DSM 864 / NBRC 100397 / JF-1) protein is Large ribosomal subunit protein eL40.